The sequence spans 55 residues: VILLLLIASAPSVDAQPKTKDDVPLAPLHDNAKSALQHLNQRCCQTFYWCCGQGK.

An N-terminal signal peptide occupies residues 1-15 (VILLLLIASAPSVDA). A propeptide spanning residues 16–41 (QPKTKDDVPLAPLHDNAKSALQHLNQ) is cleaved from the precursor. Glutamine amide is present on Gln-53.

Post-translationally, contains 2 disulfide bonds that can be either 'C1-C3, C2-C4' or 'C1-C4, C2-C3', since these disulfide connectivities have been observed for conotoxins with cysteine framework V (for examples, see AC P0DQQ7 and AC P81755). In terms of tissue distribution, expressed by the venom duct.

The protein localises to the secreted. In Conus victoriae (Queen Victoria cone), this protein is Conotoxin vc5b.